An 861-amino-acid polypeptide reads, in one-letter code: Envelope glycoprotein gp160 (861 aa).

The first 32 residues, 1–32 (MRVKEKYQHLWRWGWKWGTMLLGILMICSATE), serve as a signal peptide directing secretion. The Extracellular portion of the chain corresponds to 33–689 (KLWVTVYYGV…ITNWLWYIKI (657 aa)). The cysteines at positions 54 and 74 are disulfide-linked. Residues Asn88, Asn136, Asn141, Asn146, Asn161, and Asn165 are each glycosylated (N-linked (GlcNAc...) asparagine; by host). Disulfide bonds link Cys119-Cys210, Cys126-Cys201, Cys131-Cys162, Cys223-Cys252, and Cys233-Cys244. Residues 131 to 161 (CTDLGNATNTNSSNTNSSSGEMMMEKGEIKN) form a V1 region. Residues 162 to 201 (CSFNISTSIRGKVQKEYAFFYKLDIIPIDNDTTSYTLTSC) are V2. Positions 184–186 (LDI) match the Putative binding site to alpha-4/beta-7 integrin motif. Residues Asn191, Asn202, Asn235, Asn239, Asn246, Asn267, Asn281, Asn294, Asn300, Asn306, Asn337, Asn344, and Asn361 are each glycosylated (N-linked (GlcNAc...) asparagine; by host). Positions 301–335 (CTRPNNNTRKSIRIQRGPGRAFVTIGKIGNMRQAH) are V3. The cysteines at positions 301 and 336 are disulfide-linked. Residues 369 to 379 (SSGGDPEIVTH) are CD4-binding loop. Cystine bridges form between Cys383/Cys450 and Cys390/Cys423. The segment at 390–423 (CNSTQLFNSTWFNSTWSTEGSNNTEGSDTITLPC) is V4. 6 N-linked (GlcNAc...) asparagine; by host glycosylation sites follow: Asn391, Asn397, Asn402, Asn411, Asn453, and Asn468. 2 V5 regions span residues 466–476 (NNNGSEIFRPG) and 468–476 (NGSEIFRPG). The fusion peptide stretch occupies residues 517–537 (AVGIGALFLGFLGAAGSTMGA). The interval 579–597 (KQLQARILAVERYLKDQQL) is immunosuppression. Cys603 and Cys609 form a disulfide bridge. N-linked (GlcNAc...) asparagine; by host glycans are attached at residues Asn616, Asn621, Asn630, Asn642, and Asn679. Positions 638-672 (REINNYTSLIHSLIEESQNQQEKNEQELLELDKWA) form a coiled coil. The segment at 667-688 (ELDKWASLWNWFNITNWLWYIK) is MPER; binding to GalCer. Residues 690–710 (FIMIVGGLVGLRIVFAVLSIV) form a helical membrane-spanning segment. Over 711–861 (NRVRQGYSPL…IRQGLERILL (151 aa)) the chain is Cytoplasmic. The YXXL motif; contains endocytosis signal signature appears at 717-720 (YSPL). Residues 723-747 (QTHLPTPRGPDRPEGIEEEGGERDR) are disordered. S-palmitoyl cysteine; by host attachment occurs at residues Cys769 and Cys842. Positions 860-861 (LL) match the Di-leucine internalization motif motif.

Belongs to the HIV-1 env protein family. The mature envelope protein (Env) consists of a homotrimer of non-covalently associated gp120-gp41 heterodimers. The resulting complex protrudes from the virus surface as a spike. There seems to be as few as 10 spikes on the average virion. Interacts with host CD4, CCR5 and CXCR4. Gp120 also interacts with the C-type lectins CD209/DC-SIGN and CLEC4M/DC-SIGNR (collectively referred to as DC-SIGN(R)). Gp120 and gp41 interact with GalCer. Gp120 interacts with host ITGA4/ITGB7 complex; on CD4+ T-cells, this interaction results in rapid activation of integrin ITGAL/LFA-1, which facilitates efficient cell-to-cell spreading of HIV-1. Gp120 interacts with cell-associated heparan sulfate; this interaction increases virus infectivity on permissive cells and may be involved in infection of CD4- cells. In terms of assembly, the mature envelope protein (Env) consists of a homotrimer of non-covalently associated gp120-gp41 heterodimers. The resulting complex protrudes from the virus surface as a spike. There seems to be as few as 10 spikes on the average virion. Highly glycosylated by host. The high number of glycan on the protein is reffered to as 'glycan shield' because it contributes to hide protein sequence from adaptive immune system. In terms of processing, palmitoylation of the transmembrane protein and of Env polyprotein (prior to its proteolytic cleavage) is essential for their association with host cell membrane lipid rafts. Palmitoylation is therefore required for envelope trafficking to classical lipid rafts, but not for viral replication. Post-translationally, specific enzymatic cleavages in vivo yield mature proteins. Envelope glycoproteins are synthesized as an inactive precursor that is heavily N-glycosylated and processed likely by host cell furin in the Golgi to yield the mature SU and TM proteins. The cleavage site between SU and TM requires the minimal sequence [KR]-X-[KR]-R. About 2 of the 9 disulfide bonds of gp41 are reduced by P4HB/PDI, following binding to CD4 receptor.

The protein localises to the virion membrane. It localises to the host cell membrane. Its subcellular location is the host endosome membrane. Oligomerizes in the host endoplasmic reticulum into predominantly trimers. In a second time, gp160 transits in the host Golgi, where glycosylation is completed. The precursor is then proteolytically cleaved in the trans-Golgi and thereby activated by cellular furin or furin-like proteases to produce gp120 and gp41. Its function is as follows. Attaches the virus to the host lymphoid cell by binding to the primary receptor CD4. This interaction induces a structural rearrangement creating a high affinity binding site for a chemokine coreceptor like CXCR4 and/or CCR5. Acts as a ligand for CD209/DC-SIGN and CLEC4M/DC-SIGNR, which are respectively found on dendritic cells (DCs), and on endothelial cells of liver sinusoids and lymph node sinuses. These interactions allow capture of viral particles at mucosal surfaces by these cells and subsequent transmission to permissive cells. HIV subverts the migration properties of dendritic cells to gain access to CD4+ T-cells in lymph nodes. Virus transmission to permissive T-cells occurs either in trans (without DCs infection, through viral capture and transmission), or in cis (following DCs productive infection, through the usual CD4-gp120 interaction), thereby inducing a robust infection. In trans infection, bound virions remain infectious over days and it is proposed that they are not degraded, but protected in non-lysosomal acidic organelles within the DCs close to the cell membrane thus contributing to the viral infectious potential during DCs' migration from the periphery to the lymphoid tissues. On arrival at lymphoid tissues, intact virions recycle back to DCs' cell surface allowing virus transmission to CD4+ T-cells. Functionally, acts as a class I viral fusion protein. Under the current model, the protein has at least 3 conformational states: pre-fusion native state, pre-hairpin intermediate state, and post-fusion hairpin state. During fusion of viral and target intracellular membranes, the coiled coil regions (heptad repeats) assume a trimer-of-hairpins structure, positioning the fusion peptide in close proximity to the C-terminal region of the ectodomain. The formation of this structure appears to drive apposition and subsequent fusion of viral and target cell membranes. Complete fusion occurs in host cell endosomes and is dynamin-dependent, however some lipid transfer might occur at the plasma membrane. The virus undergoes clathrin-dependent internalization long before endosomal fusion, thus minimizing the surface exposure of conserved viral epitopes during fusion and reducing the efficacy of inhibitors targeting these epitopes. Membranes fusion leads to delivery of the nucleocapsid into the cytoplasm. In Homo sapiens (Human), this protein is Envelope glycoprotein gp160.